Here is an 812-residue protein sequence, read N- to C-terminus: Valine--tRNA ligase (812 aa).

Positions 46-56 (PTVSGQLHIGH) match the 'HIGH' region motif. The 'KMSKS' region signature appears at 536-540 (KMSKS). An ATP-binding site is contributed by lysine 539.

Belongs to the class-I aminoacyl-tRNA synthetase family. ValS type 2 subfamily. In terms of assembly, monomer.

The protein localises to the cytoplasm. The catalysed reaction is tRNA(Val) + L-valine + ATP = L-valyl-tRNA(Val) + AMP + diphosphate. In terms of biological role, catalyzes the attachment of valine to tRNA(Val). As ValRS can inadvertently accommodate and process structurally similar amino acids such as threonine, to avoid such errors, it has a 'posttransfer' editing activity that hydrolyzes mischarged Thr-tRNA(Val) in a tRNA-dependent manner. This chain is Valine--tRNA ligase, found in Rickettsia bellii (strain OSU 85-389).